A 318-amino-acid polypeptide reads, in one-letter code: MLHLIYISIIVVLIIILISYTRKPKYFRITAPRSVALFHGIHPLNPKNYKTFSEEFETILNNAIEDGDFKGQLTEPCSYALRGGKYIRPIILMEIVRACQLQHSFGAPIYPAEAALAVEYFHVASLIIDDMPSFDNDVKRRNKDTVWARFGVAKAQMSALALTMQGFQNICRQIDWIKEHCPRFPDPNQLGALLCTFVSHSLNSAGSGQLVDTPEKTIPFFKIAFIMGWVLGTGSVEDIGMIERAAHCFGNAFQLADDIKDHDTDTGWNYAKIHGKRKTFDDVAQFLQECKKILHGKKIYTSIWNEIFQKVINVALGT.

The helical transmembrane segment at 1 to 21 threads the bilayer; sequence MLHLIYISIIVVLIIILISYT. Residues K85, R88, and H122 each coordinate isopentenyl diphosphate. D129 and D135 together coordinate Mg(2+). A dimethylallyl diphosphate-binding site is contributed by R140. R141 is an isopentenyl diphosphate binding site. K216, T217, and Q254 together coordinate dimethylallyl diphosphate.

It belongs to the FPP/GGPP synthase family. Asfivirus trans-prenyltransferase subfamily. Requires Mg(2+) as cofactor.

It is found in the host endoplasmic reticulum. The protein resides in the host membrane. The catalysed reaction is isopentenyl diphosphate + dimethylallyl diphosphate = (2E)-geranyl diphosphate + diphosphate. It catalyses the reaction isopentenyl diphosphate + (2E)-geranyl diphosphate = (2E,6E)-farnesyl diphosphate + diphosphate. It carries out the reaction isopentenyl diphosphate + (2E,6E)-farnesyl diphosphate = (2E,6E,10E)-geranylgeranyl diphosphate + diphosphate. The enzyme catalyses isopentenyl diphosphate + (2E,6E,10E)-geranylgeranyl diphosphate = (2E,6E,10E,14E)-geranylfarnesyl diphosphate + diphosphate. Its pathway is isoprenoid biosynthesis; farnesyl diphosphate biosynthesis; farnesyl diphosphate from geranyl diphosphate and isopentenyl diphosphate: step 1/1. It functions in the pathway isoprenoid biosynthesis; geranyl diphosphate biosynthesis; geranyl diphosphate from dimethylallyl diphosphate and isopentenyl diphosphate: step 1/1. The protein operates within isoprenoid biosynthesis; geranylgeranyl diphosphate biosynthesis; geranylgeranyl diphosphate from farnesyl diphosphate and isopentenyl diphosphate: step 1/1. Trans-prenyltransferase that catalyzes the sequential condensation of isopentenyl diphosphate (IPP) with different allylic diphosphates, such as dimethylallyl diphosphate (DMAPP), geranyl diphosphate (GPP), farnesyl diphosphate (FPP) and geranylgeranyl diphosphate (GGPP), farnesyl diphosphate being the best allylic substrate. This African swine fever virus (isolate Warthog/Namibia/Wart80/1980) (ASFV) protein is Trans-prenyltransferase.